Consider the following 640-residue polypeptide: Pleckstrin homology-like domain family B member 3 (640 aa).

Disordered stretches follow at residues 1-100 (MGTR…AARR), 162-189 (LEQQAASEQRGRQQREQEQRRLSQERDR), 241-262 (LERESRQEEEDRDSPGPQVPDP), 387-412 (GLQRTGSLPRKRGERGSQRGSPRPLS), and 476-504 (REGTRRGTEGSSGPAVPAITAPPTPPHPP). The segment covering 76-90 (PPIAMAATPPASTSS) has biased composition (low complexity). Positions 104 to 327 (QQLEALTRVA…ERSRLLELNC (224 aa)) form a coiled coil. The segment covering 170–189 (QRGRQQREQEQRRLSQERDR) has biased composition (basic and acidic residues). A coiled-coil region spans residues 454 to 481 (DIAHMERLLQQAMAERERLLKAREGTRR). The span at 495-504 (TAPPTPPHPP) shows a compositional bias: pro residues. One can recognise a PH domain in the interval 532-635 (GCCCRGPLVK…WMDVIVTAAD (104 aa)).

In Homo sapiens (Human), this protein is Pleckstrin homology-like domain family B member 3 (PHLDB3).